The chain runs to 208 residues: Probable molybdenum cofactor guanylyltransferase (208 aa).

Residues 12 to 14, K24, D72, and D101 contribute to the GTP site; that span reads IAG. Position 101 (D101) interacts with Mg(2+).

This sequence belongs to the MobA family. Requires Mg(2+) as cofactor.

It is found in the cytoplasm. The catalysed reaction is Mo-molybdopterin + GTP + H(+) = Mo-molybdopterin guanine dinucleotide + diphosphate. In terms of biological role, transfers a GMP moiety from GTP to Mo-molybdopterin (Mo-MPT) cofactor (Moco or molybdenum cofactor) to form Mo-molybdopterin guanine dinucleotide (Mo-MGD) cofactor. The polypeptide is Probable molybdenum cofactor guanylyltransferase (Chloroflexus aggregans (strain MD-66 / DSM 9485)).